A 931-amino-acid polypeptide reads, in one-letter code: Valine--tRNA ligase (931 aa).

Residues 42-52 carry the 'HIGH' region motif; sequence PNVTGSLHMGH. The short motif at 523-527 is the 'KMSKS' region element; sequence KMSKS. Residue Lys526 participates in ATP binding. A coiled-coil region spans residues 859–931; the sequence is MAGLIDKEAE…EEQLEKIKYL (73 aa).

The protein belongs to the class-I aminoacyl-tRNA synthetase family. ValS type 1 subfamily. Monomer.

The protein localises to the cytoplasm. It catalyses the reaction tRNA(Val) + L-valine + ATP = L-valyl-tRNA(Val) + AMP + diphosphate. In terms of biological role, catalyzes the attachment of valine to tRNA(Val). As ValRS can inadvertently accommodate and process structurally similar amino acids such as threonine, to avoid such errors, it has a 'posttransfer' editing activity that hydrolyzes mischarged Thr-tRNA(Val) in a tRNA-dependent manner. The sequence is that of Valine--tRNA ligase from Alcanivorax borkumensis (strain ATCC 700651 / DSM 11573 / NCIMB 13689 / SK2).